The following is a 156-amino-acid chain: Organelle RRM domain-containing protein 2, mitochondrial (156 aa).

The N-terminal 28 residues, 1–28, are a transit peptide targeting the mitochondrion; it reads MAMAMRLPAISRAVTEVASAPVGLRRLF. The RRM domain occupies 56-134; the sequence is TNLFVSGLSK…WVIFAEYARP (79 aa). Serine 64 carries the phosphoserine modification. The span at 137–148 shows a compositional bias: polar residues; sequence QSQSYQPQNNMS. The interval 137 to 156 is disordered; sequence QSQSYQPQNNMSRPPYYGNR.

Interacts with RBG3/ORRM3. Binds to RBG2/ORRM5.

It is found in the mitochondrion. Functionally, involved in C-to-U editing of mitochondrial RNA. Functions as minor mitochondrial editing factor. Controls 6 percent of the mitochondrial editing sites. The chain is Organelle RRM domain-containing protein 2, mitochondrial from Arabidopsis thaliana (Mouse-ear cress).